The chain runs to 150 residues: Macrodomain Ter protein (150 aa).

This sequence belongs to the MatP family. In terms of assembly, homodimer.

The protein resides in the cytoplasm. Functionally, required for spatial organization of the terminus region of the chromosome (Ter macrodomain) during the cell cycle. Prevents early segregation of duplicated Ter macrodomains during cell division. Binds specifically to matS, which is a 13 bp signature motif repeated within the Ter macrodomain. This is Macrodomain Ter protein from Escherichia coli O8 (strain IAI1).